A 116-amino-acid polypeptide reads, in one-letter code: Ribonuclease P protein component (116 aa).

The protein belongs to the RnpA family. As to quaternary structure, consists of a catalytic RNA component (M1 or rnpB) and a protein subunit.

It carries out the reaction Endonucleolytic cleavage of RNA, removing 5'-extranucleotides from tRNA precursor.. Its function is as follows. RNaseP catalyzes the removal of the 5'-leader sequence from pre-tRNA to produce the mature 5'-terminus. It can also cleave other RNA substrates such as 4.5S RNA. The protein component plays an auxiliary but essential role in vivo by binding to the 5'-leader sequence and broadening the substrate specificity of the ribozyme. In Gluconacetobacter diazotrophicus (strain ATCC 49037 / DSM 5601 / CCUG 37298 / CIP 103539 / LMG 7603 / PAl5), this protein is Ribonuclease P protein component.